We begin with the raw amino-acid sequence, 159 residues long: MAIRYVRKIGDEVLRKKAKPVTEINSHILTILEDMAQTMYLNDGVGLAANQIGVLRRLVVIDVGEGLLELINPEIVYEEGEQVGAEGCLSIPGVVGEVKRPKKVKVKYLDREGKEREIEGEDLLARALCHEIDHLNGVLFIDKAIRFLDEEEKEQVKEV.

Residues Cys-88 and His-130 each contribute to the Fe cation site. Glu-131 is an active-site residue. His-134 lines the Fe cation pocket.

The protein belongs to the polypeptide deformylase family. Fe(2+) serves as cofactor.

The catalysed reaction is N-terminal N-formyl-L-methionyl-[peptide] + H2O = N-terminal L-methionyl-[peptide] + formate. Its function is as follows. Removes the formyl group from the N-terminal Met of newly synthesized proteins. Requires at least a dipeptide for an efficient rate of reaction. N-terminal L-methionine is a prerequisite for activity but the enzyme has broad specificity at other positions. The chain is Peptide deformylase from Thermoanaerobacter pseudethanolicus (strain ATCC 33223 / 39E) (Clostridium thermohydrosulfuricum).